Reading from the N-terminus, the 224-residue chain is Uracil-DNA glycosylase 2 (224 aa).

Asp-64 (proton acceptor) is an active-site residue.

It belongs to the uracil-DNA glycosylase (UDG) superfamily. UNG family.

The protein resides in the cytoplasm. The enzyme catalyses Hydrolyzes single-stranded DNA or mismatched double-stranded DNA and polynucleotides, releasing free uracil.. Functionally, excises uracil residues from the DNA which can arise as a result of misincorporation of dUMP residues by DNA polymerase or due to deamination of cytosine. The polypeptide is Uracil-DNA glycosylase 2 (Listeria innocua serovar 6a (strain ATCC BAA-680 / CLIP 11262)).